Consider the following 317-residue polypeptide: UAP56-interacting factor (317 aa).

Residue methionine 1 is modified to N-acetylmethionine. The disordered stretch occupies residues 1-26 (MNRFGTRLVGATATPPPPPKARSNEN). The residue at position 14 (threonine 14) is a Phosphothreonine. Serine 23 is subject to Phosphoserine. The UAP56-binding motif signature appears at 26-44 (NLDKIDMSLDDIIKLNRKE). Serine 60 and serine 117 each carry phosphoserine. Residue lysine 139 forms a Glycyl lysine isopeptide (Lys-Gly) (interchain with G-Cter in SUMO1) linkage. A Glycyl lysine isopeptide (Lys-Gly) (interchain with G-Cter in SUMO2) cross-link involves residue lysine 260.

It belongs to the UIF family. As to quaternary structure, interacts with DDX39B/UAP56 and NXF1; interaction with DDX39B/UAP56 and NXF1 are mutually exclusive. Interacts with SSRP1; required for its recruitment to mRNAs. Interacts with CHTOP.

The protein resides in the nucleus. The protein localises to the nucleoplasm. It is found in the nucleus speckle. Its function is as follows. Required for mRNA export from the nucleus to the cytoplasm. Acts as an adapter that uses the DDX39B/UAP56-NFX1 pathway to ensure efficient mRNA export and delivering to the nuclear pore. Associates with spliced and unspliced mRNAs simultaneously with ALYREF/THOC4. The sequence is that of UAP56-interacting factor (Fyttd1) from Mus musculus (Mouse).